Reading from the N-terminus, the 216-residue chain is Ribosomal RNA small subunit methyltransferase G (216 aa).

Residues G75, L80, and R141 each contribute to the S-adenosyl-L-methionine site.

The protein belongs to the methyltransferase superfamily. RNA methyltransferase RsmG family.

Its subcellular location is the cytoplasm. It carries out the reaction guanosine(527) in 16S rRNA + S-adenosyl-L-methionine = N(7)-methylguanosine(527) in 16S rRNA + S-adenosyl-L-homocysteine. Functionally, specifically methylates the N7 position of guanine in position 527 of 16S rRNA. The protein is Ribosomal RNA small subunit methyltransferase G of Nitrosospira multiformis (strain ATCC 25196 / NCIMB 11849 / C 71).